Here is a 394-residue protein sequence, read N- to C-terminus: Ribulose bisphosphate carboxylase large chain (394 aa).

An N6,N6,N6-trimethyllysine modification is found at K5. Residues N114 and T164 each coordinate substrate. The active-site Proton acceptor is K166. Residue K168 coordinates substrate. 3 residues coordinate Mg(2+): K192, D194, and E195. K192 carries the N6-carboxylysine modification. H285 functions as the Proton acceptor in the catalytic mechanism. Residues R286, H318, and S370 each contribute to the substrate site.

Belongs to the RuBisCO large chain family. Type I subfamily. In terms of assembly, heterohexadecamer of 8 large chains and 8 small chains. The cofactor is Mg(2+).

The protein localises to the plastid. Its subcellular location is the chloroplast. The enzyme catalyses 2 (2R)-3-phosphoglycerate + 2 H(+) = D-ribulose 1,5-bisphosphate + CO2 + H2O. It catalyses the reaction D-ribulose 1,5-bisphosphate + O2 = 2-phosphoglycolate + (2R)-3-phosphoglycerate + 2 H(+). Functionally, ruBisCO catalyzes two reactions: the carboxylation of D-ribulose 1,5-bisphosphate, the primary event in carbon dioxide fixation, as well as the oxidative fragmentation of the pentose substrate in the photorespiration process. Both reactions occur simultaneously and in competition at the same active site. The chain is Ribulose bisphosphate carboxylase large chain (rbcL) from Nymphaea odorata (White water lily).